The sequence spans 358 residues: UDP-N-acetylglucosamine--N-acetylmuramyl-(pentapeptide) pyrophosphoryl-undecaprenol N-acetylglucosamine transferase (358 aa).

Residues 11-13, Asn-120, Arg-161, Ser-188, and Gln-282 contribute to the UDP-N-acetyl-alpha-D-glucosamine site; that span reads TGG.

This sequence belongs to the glycosyltransferase 28 family. MurG subfamily.

It is found in the cell inner membrane. The catalysed reaction is di-trans,octa-cis-undecaprenyl diphospho-N-acetyl-alpha-D-muramoyl-L-alanyl-D-glutamyl-meso-2,6-diaminopimeloyl-D-alanyl-D-alanine + UDP-N-acetyl-alpha-D-glucosamine = di-trans,octa-cis-undecaprenyl diphospho-[N-acetyl-alpha-D-glucosaminyl-(1-&gt;4)]-N-acetyl-alpha-D-muramoyl-L-alanyl-D-glutamyl-meso-2,6-diaminopimeloyl-D-alanyl-D-alanine + UDP + H(+). The protein operates within cell wall biogenesis; peptidoglycan biosynthesis. In terms of biological role, cell wall formation. Catalyzes the transfer of a GlcNAc subunit on undecaprenyl-pyrophosphoryl-MurNAc-pentapeptide (lipid intermediate I) to form undecaprenyl-pyrophosphoryl-MurNAc-(pentapeptide)GlcNAc (lipid intermediate II). This Synechococcus sp. (strain CC9311) protein is UDP-N-acetylglucosamine--N-acetylmuramyl-(pentapeptide) pyrophosphoryl-undecaprenol N-acetylglucosamine transferase.